A 254-amino-acid polypeptide reads, in one-letter code: Small ribosomal subunit protein uS2 (254 aa).

Belongs to the universal ribosomal protein uS2 family.

This is Small ribosomal subunit protein uS2 from Brucella ovis (strain ATCC 25840 / 63/290 / NCTC 10512).